Consider the following 81-residue polypeptide: Sulfur carrier protein TusA (81 aa).

The Cysteine persulfide intermediate role is filled by cysteine 19.

This sequence belongs to the sulfur carrier protein TusA family.

The protein localises to the cytoplasm. Functionally, sulfur carrier protein which probably makes part of a sulfur-relay system. The chain is Sulfur carrier protein TusA from Shewanella piezotolerans (strain WP3 / JCM 13877).